A 432-amino-acid polypeptide reads, in one-letter code: MSIEVDWRAATSGPDGEALAERIRSFIHDKFQQVALPRFIRSVQVHSFDFGTIPPDLEVKDICEPFADFYEEDEDDETSDVSEELVSGHGTQWHRDLNEPPFHEEMAMNRPLRDPFDEAFHSSTLRSPMEHLNPHFLPRAGTPGIPGGTSTLGYHLMSLGGLSGTQTPLAAVAGGTPFANGWTDPGMGASSRGHPSISGPTAVHPSRMEADIDTSNPTSRPSTSSTLPSHPSASNQPSGDATTGKEHGSLAEDEHLDDPMTSGHPLRLPPRMRERRPEDFQVLCHAKYAGDVRLSLTAEILLDYPMPSFVGLPLKLNVTGITFDGVAVIAYIRKRVHFCFLSAEDADALIGSDQQEARGQDDRPWSSADPTASPKRQGGLLREIRVESEIGRKEDGKQVLKNVGKVERFVLAQVRRTFEEEMVFPSFWTFLI.

The SMP-LTD domain maps to 1-432; sequence MSIEVDWRAA…VFPSFWTFLI (432 aa). 2 disordered regions span residues 182 to 273 and 354 to 377; these read WTDP…PRMR and QQEA…PKRQ. Positions 214-234 are enriched in low complexity; it reads TSNPTSRPSTSSTLPSHPSAS. Basic and acidic residues-rich tracts occupy residues 243-253 and 355-364; these read TGKEHGSLAED and QEARGQDDRP.

The protein belongs to the MDM12 family. Component of the ER-mitochondria encounter structure (ERMES) or MDM complex, composed of mmm1, mdm10, mdm12 and mdm34. A mmm1 homodimer associates with one molecule of mdm12 on each side in a pairwise head-to-tail manner, and the SMP-LTD domains of mmm1 and mdm12 generate a continuous hydrophobic tunnel for phospholipid trafficking.

The protein resides in the mitochondrion outer membrane. It is found in the endoplasmic reticulum membrane. Its function is as follows. Component of the ERMES/MDM complex, which serves as a molecular tether to connect the endoplasmic reticulum (ER) and mitochondria. Components of this complex are involved in the control of mitochondrial shape and protein biogenesis, and function in nonvesicular lipid trafficking between the ER and mitochondria. Mdm12 is required for the interaction of the ER-resident membrane protein mmm1 and the outer mitochondrial membrane-resident beta-barrel protein mdm10. The mdm12-mmm1 subcomplex functions in the major beta-barrel assembly pathway that is responsible for biogenesis of all mitochondrial outer membrane beta-barrel proteins, and acts in a late step after the SAM complex. The mdm10-mdm12-mmm1 subcomplex further acts in the TOM40-specific pathway after the action of the mdm12-mmm1 complex. Essential for establishing and maintaining the structure of mitochondria and maintenance of mtDNA nucleoids. In Aspergillus oryzae (strain ATCC 42149 / RIB 40) (Yellow koji mold), this protein is Mitochondrial distribution and morphology protein 12.